The chain runs to 85 residues: Large ribosomal subunit protein bL27 (85 aa).

Gly residues predominate over residues 1–10 (MAQKKGGGST). The disordered stretch occupies residues 1-20 (MAQKKGGGSTRNGRDSKPKM).

This sequence belongs to the bacterial ribosomal protein bL27 family.

This chain is Large ribosomal subunit protein bL27, found in Acidovorax ebreus (strain TPSY) (Diaphorobacter sp. (strain TPSY)).